A 197-amino-acid polypeptide reads, in one-letter code: 7-methyl-GTP pyrophosphatase (197 aa).

D69 serves as the catalytic Proton acceptor.

It belongs to the Maf family. YceF subfamily. A divalent metal cation is required as a cofactor.

The protein localises to the cytoplasm. The enzyme catalyses N(7)-methyl-GTP + H2O = N(7)-methyl-GMP + diphosphate + H(+). In terms of biological role, nucleoside triphosphate pyrophosphatase that hydrolyzes 7-methyl-GTP (m(7)GTP). May have a dual role in cell division arrest and in preventing the incorporation of modified nucleotides into cellular nucleic acids. The protein is 7-methyl-GTP pyrophosphatase of Pectobacterium atrosepticum (strain SCRI 1043 / ATCC BAA-672) (Erwinia carotovora subsp. atroseptica).